Reading from the N-terminus, the 553-residue chain is Phospholipase B-like 1 (553 aa).

The N-terminal stretch at 1 to 38 (MTRGGPGGRPGLPQPPPLLLLLLLLPLLLVTAEPPKPA) is a signal peptide. Asn71 is a glycosylation site (N-linked (GlcNAc...) (high mannose) asparagine; alternate). A glycan (N-linked (GlcNAc...) (hybrid) asparagine; alternate) is linked at Asn71. Residues 209–227 (LSPTKNGSLKVFKRWDMGH) constitute a propeptide, removed in mature form. 2 N-linked (GlcNAc...) (high mannose) asparagine; alternate glycosylation sites follow: Asn308 and Asn366. Asn308 and Asn366 each carry an N-linked (GlcNAc...) (hybrid) asparagine; alternate glycan. N-linked (GlcNAc...) asparagine glycosylation is present at Asn411. 2 disulfides stabilise this stretch: Cys470–Cys475 and Cys474–Cys489. An N-linked (GlcNAc...) (high mannose) asparagine; alternate glycan is attached at Asn526. The N-linked (GlcNAc...) (hybrid) asparagine; alternate glycan is linked to Asn526.

It belongs to the phospholipase B-like family. As to quaternary structure, may form a homodimer, each monomer is composed of a chain A and a chain B. Post-translationally, the maturation cleavages that produces chains A and B are required to open the putative substrate binding pocket. Both chains A and B remain associated in the mature protein. As to expression, expressed in neutrophils and monocytes.

It localises to the lysosome. Functionally, in view of the small size of the putative binding pocket, it has been proposed that it may act as an amidase or a peptidase. Exhibits a weak phospholipase activity, acting on various phospholipids, including phosphatidylcholine, phosphatidylinositol, phosphatidylethanolamine and lysophospholipids. This is Phospholipase B-like 1 (PLBD1) from Homo sapiens (Human).